Consider the following 266-residue polypeptide: Luciferase (266 aa).

A helical transmembrane segment spans residues 22–41 (GLAAACCALAVASTIAFPYI).

It belongs to the fungal luciferase family.

The protein resides in the membrane. It catalyses the reaction 3-hydroxyhispidin + O2 = (E)-caffeoylpyruvate + hnu + CO2. It carries out the reaction 3-hydroxyhispidin + O2 = 4-[(E)-2-(3,4-dihydroxyphenyl)ethenyl]-1,7-dihydroxy-2,3,5-trioxabicyclo[2.2.2]oct-7-en-6-one. Luciferase; part of the gene cluster that mediates the fungal bioluminescence cycle. Uses the fungal luciferin 3-hydroxyhispidin as a substrate to produce an endoperoxide as a high-energy intermediate with decomposition that yields oxyluciferin (also known as caffeoylpyruvate) and light emission. The fungal bioluminescence cycle begins with the hispidin synthetase that catalyzes the formation of hispidin which is further hydroxylated by the hispidin-3-hydroxylase, yielding the fungal luciferin 3-hydroxyhispidin. The luciferase then produces an endoperoxide as a high-energy intermediate with decomposition that yields oxyluciferin and light emission. Oxyluciferin can be recycled to caffeic acid by caffeoylpyruvate hydrolase. The protein is Luciferase of Armillaria gallica (Bulbous honey fungus).